A 123-amino-acid polypeptide reads, in one-letter code: Venom peptide MmKTx1 (123 aa).

The first 21 residues, 1 to 21 (MSIKISAIALFMLSFTVFVNG), serve as a signal peptide directing secretion.

Belongs to the scorpion La1-like peptide family. In terms of processing, contains 4 disulfide bonds. As to expression, expressed by the venom gland.

Its subcellular location is the secreted. The protein is Venom peptide MmKTx1 of Olivierus martensii (Manchurian scorpion).